The following is a 78-amino-acid chain: Colicin-V immunity protein (78 aa).

This protein is able to protect a cell, which harbors the plasmid ColV encoding colicin V, against colicin V. This chain is Colicin-V immunity protein (cvi), found in Escherichia coli.